A 312-amino-acid polypeptide reads, in one-letter code: RNA binding protein fox-1 homolog 3 (312 aa).

Over residues Met1–Pro29 the composition is skewed to pro residues. Residues Met1–Ser104 form a disordered region. The span at Thr49 to Leu87 shows a compositional bias: polar residues. The RRM domain maps to Arg100–Ala175. The residue at position 223 (Arg223) is an Asymmetric dimethylarginine; alternate. Residue Arg223 is modified to Omega-N-methylarginine; alternate. At Arg272 the chain carries Asymmetric dimethylarginine.

It localises to the nucleus. It is found in the cytoplasm. Pre-mRNA alternative splicing regulator. Regulates alternative splicing of RBFOX2 to enhance the production of mRNA species that are targeted for nonsense-mediated decay (NMD). This is RNA binding protein fox-1 homolog 3 (RBFOX3) from Homo sapiens (Human).